The primary structure comprises 130 residues: Large ribosomal subunit protein bL12 (130 aa).

Positions 94-114 (MTEGLPKTVKEKTSKSDAEDT) are disordered.

The protein belongs to the bacterial ribosomal protein bL12 family. In terms of assembly, homodimer. Part of the ribosomal stalk of the 50S ribosomal subunit. Forms a multimeric L10(L12)X complex, where L10 forms an elongated spine to which 2 to 4 L12 dimers bind in a sequential fashion. Binds GTP-bound translation factors.

Forms part of the ribosomal stalk which helps the ribosome interact with GTP-bound translation factors. Is thus essential for accurate translation. The polypeptide is Large ribosomal subunit protein bL12 (Chlamydia caviae (strain ATCC VR-813 / DSM 19441 / 03DC25 / GPIC) (Chlamydophila caviae)).